The primary structure comprises 131 residues: Small ribosomal subunit protein eS17A (131 aa).

It belongs to the eukaryotic ribosomal protein eS17 family. Component of the small ribosomal subunit (SSU). Mature yeast ribosomes consist of a small (40S) and a large (60S) subunit. The 40S small subunit contains 1 molecule of ribosomal RNA (18S rRNA) and at least 33 different proteins. The large 60S subunit contains 3 rRNA molecules (25S, 5.8S and 5S rRNA) and at least 46 different proteins.

Its subcellular location is the cytoplasm. Its function is as follows. Component of the ribosome, a large ribonucleoprotein complex responsible for the synthesis of proteins in the cell. The small ribosomal subunit (SSU) binds messenger RNAs (mRNAs) and translates the encoded message by selecting cognate aminoacyl-transfer RNA (tRNA) molecules. The large subunit (LSU) contains the ribosomal catalytic site termed the peptidyl transferase center (PTC), which catalyzes the formation of peptide bonds, thereby polymerizing the amino acids delivered by tRNAs into a polypeptide chain. The nascent polypeptides leave the ribosome through a tunnel in the LSU and interact with protein factors that function in enzymatic processing, targeting, and the membrane insertion of nascent chains at the exit of the ribosomal tunnel. This is Small ribosomal subunit protein eS17A (rps1701) from Schizosaccharomyces pombe (strain 972 / ATCC 24843) (Fission yeast).